A 150-amino-acid chain; its full sequence is Large ribosomal subunit protein uL15 (150 aa).

The protein belongs to the universal ribosomal protein uL15 family. As to quaternary structure, part of the 50S ribosomal subunit.

Binds to the 23S rRNA. The chain is Large ribosomal subunit protein uL15 from Anaplasma marginale (strain Florida).